Reading from the N-terminus, the 272-residue chain is Putative pyruvate, phosphate dikinase regulatory protein (272 aa).

Residue 149–156 coordinates ADP; that stretch reads GVSRTSKT.

Belongs to the pyruvate, phosphate/water dikinase regulatory protein family. PDRP subfamily.

It carries out the reaction N(tele)-phospho-L-histidyl/L-threonyl-[pyruvate, phosphate dikinase] + ADP = N(tele)-phospho-L-histidyl/O-phospho-L-threonyl-[pyruvate, phosphate dikinase] + AMP + H(+). The enzyme catalyses N(tele)-phospho-L-histidyl/O-phospho-L-threonyl-[pyruvate, phosphate dikinase] + phosphate + H(+) = N(tele)-phospho-L-histidyl/L-threonyl-[pyruvate, phosphate dikinase] + diphosphate. Bifunctional serine/threonine kinase and phosphorylase involved in the regulation of the pyruvate, phosphate dikinase (PPDK) by catalyzing its phosphorylation/dephosphorylation. This Lactiplantibacillus plantarum (strain ATCC BAA-793 / NCIMB 8826 / WCFS1) (Lactobacillus plantarum) protein is Putative pyruvate, phosphate dikinase regulatory protein.